The following is a 428-amino-acid chain: Ectonucleoside triphosphate diphosphohydrolase 5 (428 aa).

The signal sequence occupies residues 1–24 (MTSSRLPVLLALVFSSLSPVLSHS). Glutamate 172 acts as the Proton acceptor in catalysis. Asparagine 232 carries an N-linked (GlcNAc...) asparagine glycan. Disulfide bonds link cysteine 272–cysteine 303 and cysteine 363–cysteine 377.

This sequence belongs to the GDA1/CD39 NTPase family. In terms of assembly, monomer; active form. Homodimer; disulfide-linked. Homodimers are enzymatically inactive. It depends on Ca(2+) as a cofactor. Mg(2+) is required as a cofactor.

It is found in the endoplasmic reticulum. The protein resides in the secreted. The enzyme catalyses a ribonucleoside 5'-diphosphate + H2O = a ribonucleoside 5'-phosphate + phosphate + H(+). The catalysed reaction is GDP + H2O = GMP + phosphate + H(+). It catalyses the reaction UDP + H2O = UMP + phosphate + H(+). It carries out the reaction IDP + H2O = IMP + phosphate + H(+). The enzyme catalyses CDP + H2O = CMP + phosphate + H(+). The catalysed reaction is ADP + H2O = AMP + phosphate + H(+). Its pathway is protein modification; protein glycosylation. Its function is as follows. Hydrolyzes nucleoside diphosphates with a preference for GDP, IDP and UDP compared to ADP and CDP. In the lumen of the endoplasmic reticulum, hydrolyzes UDP that acts as an end-product feedback inhibitor of the UDP-Glc:glycoprotein glucosyltransferases. UMP can be transported back by an UDP-sugar antiporter to the cytosol where it is consumed to regenerate UDP-glucose. Therefore, it positively regulates protein reglucosylation by clearing UDP from the ER lumen and by promoting the regeneration of UDP-glucose. Protein reglucosylation is essential to proper glycoprotein folding and quality control in the ER. The protein is Ectonucleoside triphosphate diphosphohydrolase 5 (ENTPD5) of Gallus gallus (Chicken).